We begin with the raw amino-acid sequence, 263 residues long: Hydroxyethylthiazole kinase 1 (263 aa).

M42 provides a ligand contact to substrate. Residues K118 and T164 each contribute to the ATP site. G191 is a substrate binding site.

The protein belongs to the Thz kinase family. Mg(2+) is required as a cofactor.

The catalysed reaction is 5-(2-hydroxyethyl)-4-methylthiazole + ATP = 4-methyl-5-(2-phosphooxyethyl)-thiazole + ADP + H(+). It functions in the pathway cofactor biosynthesis; thiamine diphosphate biosynthesis; 4-methyl-5-(2-phosphoethyl)-thiazole from 5-(2-hydroxyethyl)-4-methylthiazole: step 1/1. Its function is as follows. Catalyzes the phosphorylation of the hydroxyl group of 4-methyl-5-beta-hydroxyethylthiazole (THZ). This chain is Hydroxyethylthiazole kinase 1, found in Clostridium botulinum (strain ATCC 19397 / Type A).